A 66-amino-acid polypeptide reads, in one-letter code: Large ribosomal subunit protein bL33c (66 aa).

The protein belongs to the bacterial ribosomal protein bL33 family.

The protein localises to the plastid. It localises to the chloroplast. This Vitis vinifera (Grape) protein is Large ribosomal subunit protein bL33c.